A 103-amino-acid chain; its full sequence is Small ribosomal subunit protein uS10 (103 aa).

Belongs to the universal ribosomal protein uS10 family. In terms of assembly, part of the 30S ribosomal subunit.

Its function is as follows. Involved in the binding of tRNA to the ribosomes. This chain is Small ribosomal subunit protein uS10, found in Chlorobium chlorochromatii (strain CaD3).